The chain runs to 419 residues: BTB/POZ domain-containing protein KCTD20 (419 aa).

A BTB domain is found at 117-191 (EKVTLLVDGT…YKTGIINCPD (75 aa)).

Interacts with AKT1; AKT2 and AKT3. Interacts with PPP2CA and PPP1CA. Part of a complex containing MARK4. Ubiquitously expressed.

The protein resides in the cytoplasm. Functionally, promotes the phosphorylation of AKT family members. The chain is BTB/POZ domain-containing protein KCTD20 (Kctd20) from Mus musculus (Mouse).